A 261-amino-acid polypeptide reads, in one-letter code: Cytochrome c oxidase subunit 3 (261 aa).

The next 6 membrane-spanning stretches (helical) occupy residues 31–51 (LVLW…LLLI), 82–102 (PMIL…WAFF), 126–146 (PFLV…TITW), 159–179 (AIQA…LQAW), 197–217 (FFVA…FLLV), and 239–259 (AWYW…IYWW).

It belongs to the cytochrome c oxidase subunit 3 family. In terms of assembly, component of the cytochrome c oxidase (complex IV, CIV), a multisubunit enzyme composed of a catalytic core of 3 subunits and several supernumerary subunits. The complex exists as a monomer or a dimer and forms supercomplexes (SCs) in the inner mitochondrial membrane with ubiquinol-cytochrome c oxidoreductase (cytochrome b-c1 complex, complex III, CIII).

The protein resides in the mitochondrion inner membrane. It catalyses the reaction 4 Fe(II)-[cytochrome c] + O2 + 8 H(+)(in) = 4 Fe(III)-[cytochrome c] + 2 H2O + 4 H(+)(out). Component of the cytochrome c oxidase, the last enzyme in the mitochondrial electron transport chain which drives oxidative phosphorylation. The respiratory chain contains 3 multisubunit complexes succinate dehydrogenase (complex II, CII), ubiquinol-cytochrome c oxidoreductase (cytochrome b-c1 complex, complex III, CIII) and cytochrome c oxidase (complex IV, CIV), that cooperate to transfer electrons derived from NADH and succinate to molecular oxygen, creating an electrochemical gradient over the inner membrane that drives transmembrane transport and the ATP synthase. Cytochrome c oxidase is the component of the respiratory chain that catalyzes the reduction of oxygen to water. Electrons originating from reduced cytochrome c in the intermembrane space (IMS) are transferred via the dinuclear copper A center (CU(A)) of subunit 2 and heme A of subunit 1 to the active site in subunit 1, a binuclear center (BNC) formed by heme A3 and copper B (CU(B)). The BNC reduces molecular oxygen to 2 water molecules using 4 electrons from cytochrome c in the IMS and 4 protons from the mitochondrial matrix. In Paracentrotus lividus (Common sea urchin), this protein is Cytochrome c oxidase subunit 3 (COIII).